Reading from the N-terminus, the 316-residue chain is MSDSLRIIFAGTPDFAARHLDALIDAKQQVVGVFTQPDRPAGRGNRLTPSPVKELAERHDLPVFQPASLRKPEGQRSVAELNADIMVVVAYGLILPQAVLDLPLLGCINVHGSLLPRWRGAAPIQRALWAGDDRTGVTIMQMDAGLDTGAMLHKAVCAIQHDDTSASLYDKLAQIGPNALLSTLTQIAAGRAVAESQDNALATYADKLSKEEARLDWRLPAAQLERCIRAFNPWPISYFSLAEQPIKVWAAGVDDGQTSSHAPGTILAADKAGIHIATGAGVLTLTQLQPAGKKAMSVQDLLNSRRESFIPGTVLD.

113–116 (SLLP) is a (6S)-5,6,7,8-tetrahydrofolate binding site.

This sequence belongs to the Fmt family.

The enzyme catalyses L-methionyl-tRNA(fMet) + (6R)-10-formyltetrahydrofolate = N-formyl-L-methionyl-tRNA(fMet) + (6S)-5,6,7,8-tetrahydrofolate + H(+). Attaches a formyl group to the free amino group of methionyl-tRNA(fMet). The formyl group appears to play a dual role in the initiator identity of N-formylmethionyl-tRNA by promoting its recognition by IF2 and preventing the misappropriation of this tRNA by the elongation apparatus. This is Methionyl-tRNA formyltransferase from Sodalis glossinidius (strain morsitans).